Consider the following 714-residue polypeptide: Fatty acid oxidation complex subunit alpha (714 aa).

The segment at Met1–Pro190 is enoyl-CoA hydratase. The segment at Ala306–Gln714 is 3-hydroxyacyl-CoA dehydrogenase.

It in the N-terminal section; belongs to the enoyl-CoA hydratase/isomerase family. In the central section; belongs to the 3-hydroxyacyl-CoA dehydrogenase family. Heterotetramer of two alpha chains (FadJ) and two beta chains (FadI).

Its subcellular location is the cytoplasm. The catalysed reaction is a (3S)-3-hydroxyacyl-CoA = a (2E)-enoyl-CoA + H2O. It catalyses the reaction a 4-saturated-(3S)-3-hydroxyacyl-CoA = a (3E)-enoyl-CoA + H2O. The enzyme catalyses a (3S)-3-hydroxyacyl-CoA + NAD(+) = a 3-oxoacyl-CoA + NADH + H(+). It carries out the reaction (3S)-3-hydroxybutanoyl-CoA = (3R)-3-hydroxybutanoyl-CoA. It participates in lipid metabolism; fatty acid beta-oxidation. In terms of biological role, catalyzes the formation of a hydroxyacyl-CoA by addition of water on enoyl-CoA. Also exhibits 3-hydroxyacyl-CoA epimerase and 3-hydroxyacyl-CoA dehydrogenase activities. The polypeptide is Fatty acid oxidation complex subunit alpha (Escherichia coli O45:K1 (strain S88 / ExPEC)).